Here is a 243-residue protein sequence, read N- to C-terminus: MIVIPAIDLKNGQCVRLRQGLMEDTTVFSDSPVEMAEQWVKQGARRVHLVDLNGAFEGRPVNVSSVTEVVSAFPDLPVQIGGGIRNMQIANAYIEAGIDYLIIGTMAVTNPEFVSELCREFPSKVIVGLDANDGLVATQGWTQQTDLNVVNLSKKFEQYGVSSIVYTDIARDGMMQGVNIEATVDLAKQTSIPIIASGGISNMEDIFGLLVEAHHGIMGAIIGRAIYEGTLDFKQAQQFCDAN.

The Proton acceptor role is filled by Asp-8. The active-site Proton donor is Asp-130.

It belongs to the HisA/HisF family.

The protein localises to the cytoplasm. The enzyme catalyses 1-(5-phospho-beta-D-ribosyl)-5-[(5-phospho-beta-D-ribosylamino)methylideneamino]imidazole-4-carboxamide = 5-[(5-phospho-1-deoxy-D-ribulos-1-ylimino)methylamino]-1-(5-phospho-beta-D-ribosyl)imidazole-4-carboxamide. The protein operates within amino-acid biosynthesis; L-histidine biosynthesis; L-histidine from 5-phospho-alpha-D-ribose 1-diphosphate: step 4/9. The chain is 1-(5-phosphoribosyl)-5-[(5-phosphoribosylamino)methylideneamino] imidazole-4-carboxamide isomerase from Ruthia magnifica subsp. Calyptogena magnifica.